We begin with the raw amino-acid sequence, 882 residues long: Alanine--tRNA ligase (882 aa).

Residues histidine 570, histidine 574, cysteine 672, and histidine 676 each coordinate Zn(2+).

Belongs to the class-II aminoacyl-tRNA synthetase family. The cofactor is Zn(2+).

The protein resides in the cytoplasm. The enzyme catalyses tRNA(Ala) + L-alanine + ATP = L-alanyl-tRNA(Ala) + AMP + diphosphate. In terms of biological role, catalyzes the attachment of alanine to tRNA(Ala) in a two-step reaction: alanine is first activated by ATP to form Ala-AMP and then transferred to the acceptor end of tRNA(Ala). Also edits incorrectly charged Ser-tRNA(Ala) and Gly-tRNA(Ala) via its editing domain. The chain is Alanine--tRNA ligase from Xanthomonas axonopodis pv. citri (strain 306).